Here is a 379-residue protein sequence, read N- to C-terminus: Mating-type protein MAT-1 (379 aa).

Residues 60–117 (KARKALNAFVGFRCYYITIPMFKPWPMKKLSNLIGLLWEADPNKSLWSLMAKAWSTIR) constitute a DNA-binding region (alpha box).

This sequence belongs to the MATALPHA1 family.

The protein localises to the nucleus. Mating type proteins are sequence specific DNA-binding proteins that act as master switches in fungal differentiation by controlling gene expression in a cell type-specific fashion. Transcriptional activator that induces the transcription of alpha-specific genes. The sequence is that of Mating-type protein MAT-1 (MAT1) from Cochliobolus carbonum (strain 26-R-13) (Maize leaf spot fungus).